A 188-amino-acid chain; its full sequence is Elongation factor P (188 aa).

Belongs to the elongation factor P family.

The protein localises to the cytoplasm. The protein operates within protein biosynthesis; polypeptide chain elongation. Its function is as follows. Involved in peptide bond synthesis. Stimulates efficient translation and peptide-bond synthesis on native or reconstituted 70S ribosomes in vitro. Probably functions indirectly by altering the affinity of the ribosome for aminoacyl-tRNA, thus increasing their reactivity as acceptors for peptidyl transferase. This chain is Elongation factor P, found in Chlorobium limicola (strain DSM 245 / NBRC 103803 / 6330).